Consider the following 130-residue polypeptide: UPF0102 protein TDE_2303 (130 aa).

The protein belongs to the UPF0102 family.

This Treponema denticola (strain ATCC 35405 / DSM 14222 / CIP 103919 / JCM 8153 / KCTC 15104) protein is UPF0102 protein TDE_2303.